A 516-amino-acid chain; its full sequence is Threonine synthase 2, chloroplastic (516 aa).

The N-terminal 33 residues, 1–33 (MASFSLPHSATYFPSHSETSLKPHSAASFTVRC), are a transit peptide targeting the chloroplast. Positions 1-37 (MASFSLPHSATYFPSHSETSLKPHSAASFTVRCTSAS) are enriched in polar residues. The segment at 1-55 (MASFSLPHSATYFPSHSETSLKPHSAASFTVRCTSASPAVPPQTPQKPRRSPDEN) is disordered. S-adenosyl-L-methionine-binding positions include 133–135 (PYG), 156–158 (SAF), asparagine 163, leucine 164, lysine 172, and asparagine 178. Lysine 194 carries the N6-(pyridoxal phosphate)lysine modification. Residues 326–330 (GNLGN) and threonine 464 each bind pyridoxal 5'-phosphate.

The protein belongs to the threonine synthase family. In terms of assembly, homodimer. It depends on pyridoxal 5'-phosphate as a cofactor.

The protein localises to the plastid. It is found in the chloroplast. The enzyme catalyses O-phospho-L-homoserine + H2O = L-threonine + phosphate. The protein operates within amino-acid biosynthesis; L-threonine biosynthesis; L-threonine from L-aspartate: step 5/5. With respect to regulation, allosterically activated by S-adenosyl-methionine (SAM). In terms of biological role, catalyzes the gamma-elimination of phosphate from L-phosphohomoserine and the beta-addition of water to produce L-threonine. In Arabidopsis thaliana (Mouse-ear cress), this protein is Threonine synthase 2, chloroplastic (TS2).